We begin with the raw amino-acid sequence, 279 residues long: MSNQELVTLNVGGMKFSTLSATLRRFPDSRLARMLDNADREIRIINGHYFIDRDGSLFSYILDYVRTSQLSLPSGFSEFERLQREAEFYQLLSLADLLSQDTLYRPRVEILEVRFLLQETHAFFRLFCSSSTTIEMMADRILMFAEQPMGSQGWSFPFSAQKPLAPVPLQRPSHHDVVFQCGTDYTNGEHVGARYVSIKPDQRKLINGTNVLGLLLDILLKEGFCLISTRSVSAEEKVECYTFERKKRPEVLTIHENSRQENYETETVQVKQAKPNKKR.

A BTB domain is found at 5-74 (ELVTLNVGGM…VRTSQLSLPS (70 aa)). Positions 256 to 279 (ENSRQENYETETVQVKQAKPNKKR) are disordered.

It localises to the endoplasmic reticulum. Functionally, inhibits potassium fluxes in cells, possibly by retaining potassium channels in the cytoplasm. In Xenopus tropicalis (Western clawed frog), this protein is Putative potassium channel regulatory protein (kcnrg).